Reading from the N-terminus, the 754-residue chain is Subtilisin-like protease SBT3.12 (754 aa).

The N-terminal stretch at 1–28 is a signal peptide; it reads MGIVKGRSRAGLFIGFLFIVNVGFCVFA. The propeptide at 29–117 is activation peptide; that stretch reads QESSNEERKI…VAPNRKVELQ (89 aa). Positions 39-116 constitute an Inhibitor I9 domain; sequence YVVHLGVRRH…SVAPNRKVEL (78 aa). A Peptidase S8 domain is found at 121 to 606; it reads IYDYLGLSPS…AGLVNAERAK (486 aa). Residue Asp151 is the Charge relay system of the active site. Asn206 carries an N-linked (GlcNAc...) asparagine glycan. His224 (charge relay system) is an active-site residue. N-linked (GlcNAc...) asparagine glycosylation is found at Asn239 and Asn369. Catalysis depends on Ser537, which acts as the Charge relay system. 2 N-linked (GlcNAc...) asparagine glycosylation sites follow: Asn629 and Asn740.

Belongs to the peptidase S8 family.

Its subcellular location is the secreted. This Arabidopsis thaliana (Mouse-ear cress) protein is Subtilisin-like protease SBT3.12.